The chain runs to 391 residues: Elongation factor Tu (391 aa).

A tr-type G domain is found at 10–201 (KPHVNIGTIG…AVDEYIPTPA (192 aa)). A G1 region spans residues 19–26 (GHVDHGKT). GTP is bound at residue 19 to 26 (GHVDHGKT). Thr-26 contributes to the Mg(2+) binding site. Residues 55-59 (GITIS) form a G2 region. The segment at 76–79 (DCPG) is G3. Residues 76–80 (DCPGH) and 131–134 (NKVD) each bind GTP. A G4 region spans residues 131–134 (NKVD). The interval 169–171 (SAL) is G5.

Belongs to the TRAFAC class translation factor GTPase superfamily. Classic translation factor GTPase family. EF-Tu/EF-1A subfamily. In terms of assembly, monomer.

It localises to the cytoplasm. It catalyses the reaction GTP + H2O = GDP + phosphate + H(+). Functionally, GTP hydrolase that promotes the GTP-dependent binding of aminoacyl-tRNA to the A-site of ribosomes during protein biosynthesis. The protein is Elongation factor Tu of Ruegeria pomeroyi (strain ATCC 700808 / DSM 15171 / DSS-3) (Silicibacter pomeroyi).